The sequence spans 292 residues: Elongation factor Ts (292 aa).

The segment at 80–83 (TDFV) is involved in Mg(2+) ion dislocation from EF-Tu.

It belongs to the EF-Ts family.

The protein resides in the cytoplasm. In terms of biological role, associates with the EF-Tu.GDP complex and induces the exchange of GDP to GTP. It remains bound to the aminoacyl-tRNA.EF-Tu.GTP complex up to the GTP hydrolysis stage on the ribosome. The sequence is that of Elongation factor Ts from Ralstonia nicotianae (strain ATCC BAA-1114 / GMI1000) (Ralstonia solanacearum).